The following is a 404-amino-acid chain: Cysteine desulfurase IscS (404 aa).

Pyridoxal 5'-phosphate contacts are provided by residues 75–76, asparagine 155, glutamine 183, and 203–205; these read AT and SGH. Lysine 206 is subject to N6-(pyridoxal phosphate)lysine. Residue threonine 243 participates in pyridoxal 5'-phosphate binding. The Cysteine persulfide intermediate role is filled by cysteine 328. Residue cysteine 328 coordinates [2Fe-2S] cluster.

It belongs to the class-V pyridoxal-phosphate-dependent aminotransferase family. NifS/IscS subfamily. In terms of assembly, homodimer. Forms a heterotetramer with IscU, interacts with other sulfur acceptors. It depends on pyridoxal 5'-phosphate as a cofactor.

The protein localises to the cytoplasm. It carries out the reaction (sulfur carrier)-H + L-cysteine = (sulfur carrier)-SH + L-alanine. It functions in the pathway cofactor biosynthesis; iron-sulfur cluster biosynthesis. Master enzyme that delivers sulfur to a number of partners involved in Fe-S cluster assembly, tRNA modification or cofactor biosynthesis. Catalyzes the removal of elemental sulfur atoms from cysteine to produce alanine. Functions as a sulfur delivery protein for Fe-S cluster synthesis onto IscU, an Fe-S scaffold assembly protein, as well as other S acceptor proteins. This Shewanella denitrificans (strain OS217 / ATCC BAA-1090 / DSM 15013) protein is Cysteine desulfurase IscS.